Here is a 114-residue protein sequence, read N- to C-terminus: T cell receptor beta variable 6-9 (114 aa).

An N-terminal signal peptide occupies residues 1–21 (MSIGLLCCVAFSLLWAGPVNA). One can recognise an Ig-like domain in the interval 22 to 114 (GVTQTPKFHI…TSVYFCASSY (93 aa)). Cysteine 42 and cysteine 110 form a disulfide bridge. N-linked (GlcNAc...) asparagine glycosylation is present at asparagine 84.

As to quaternary structure, alpha-beta TR is a heterodimer composed of an alpha and beta chain; disulfide-linked. The alpha-beta TR is associated with the transmembrane signaling CD3 coreceptor proteins to form the TR-CD3 (TcR or TCR). The assembly of alpha-beta TR heterodimers with CD3 occurs in the endoplasmic reticulum where a single alpha-beta TR heterodimer associates with one CD3D-CD3E heterodimer, one CD3G-CD3E heterodimer and one CD247 homodimer forming a stable octameric structure. CD3D-CD3E and CD3G-CD3E heterodimers preferentially associate with TR alpha and TR beta chains, respectively. The association of the CD247 homodimer is the last step of TcR assembly in the endoplasmic reticulum and is required for transport to the cell surface.

It localises to the cell membrane. Its function is as follows. V region of the variable domain of T cell receptor (TR) beta chain that participates in the antigen recognition. Alpha-beta T cell receptors are antigen specific receptors which are essential to the immune response and are present on the cell surface of T lymphocytes. Recognize peptide-major histocompatibility (MH) (pMH) complexes that are displayed by antigen presenting cells (APC), a prerequisite for efficient T cell adaptive immunity against pathogens. Binding of alpha-beta TR to pMH complex initiates TR-CD3 clustering on the cell surface and intracellular activation of LCK that phosphorylates the ITAM motifs of CD3G, CD3D, CD3E and CD247 enabling the recruitment of ZAP70. In turn ZAP70 phosphorylates LAT, which recruits numerous signaling molecules to form the LAT signalosome. The LAT signalosome propagates signal branching to three major signaling pathways, the calcium, the mitogen-activated protein kinase (MAPK) kinase and the nuclear factor NF-kappa-B (NF-kB) pathways, leading to the mobilization of transcription factors that are critical for gene expression and essential for T cell growth and differentiation. The T cell repertoire is generated in the thymus, by V-(D)-J rearrangement. This repertoire is then shaped by intrathymic selection events to generate a peripheral T cell pool of self-MH restricted, non-autoaggressive T cells. Post-thymic interaction of alpha-beta TR with the pMH complexes shapes TR structural and functional avidity. In Homo sapiens (Human), this protein is T cell receptor beta variable 6-9.